A 372-amino-acid polypeptide reads, in one-letter code: tRNA-specific 2-thiouridylase MnmA (372 aa).

ATP-binding positions include 16–23 (GMSGGVDS) and methionine 42. The segment at 102-104 (NPD) is interaction with target base in tRNA. Catalysis depends on cysteine 107, which acts as the Nucleophile. Residues cysteine 107 and cysteine 205 are joined by a disulfide bond. Glycine 132 contacts ATP. The segment at 155–157 (KDQ) is interaction with tRNA. Catalysis depends on cysteine 205, which acts as the Cysteine persulfide intermediate. An interaction with tRNA region spans residues 317–318 (RY).

Belongs to the MnmA/TRMU family.

It is found in the cytoplasm. It carries out the reaction S-sulfanyl-L-cysteinyl-[protein] + uridine(34) in tRNA + AH2 + ATP = 2-thiouridine(34) in tRNA + L-cysteinyl-[protein] + A + AMP + diphosphate + H(+). In terms of biological role, catalyzes the 2-thiolation of uridine at the wobble position (U34) of tRNA, leading to the formation of s(2)U34. This is tRNA-specific 2-thiouridylase MnmA from Shewanella sp. (strain ANA-3).